A 165-amino-acid chain; its full sequence is MKNIVLGGGCFWCVEAVFERLKGVIDTEVGYSGGNPNPSYESVCNGDGNIEVVKINYDEKQISLLEILTLFFKIHDPTSIDKQGGDIGIQYRSIIFYENEEDKILAQNFIEEQQKIFSKKIVTKISRLQTYYKAENYHQHYFINNPNQGYCQAVIAPKLQKIQSG.

Cys10 is a catalytic residue.

It belongs to the MsrA Met sulfoxide reductase family.

It catalyses the reaction L-methionyl-[protein] + [thioredoxin]-disulfide + H2O = L-methionyl-(S)-S-oxide-[protein] + [thioredoxin]-dithiol. It carries out the reaction [thioredoxin]-disulfide + L-methionine + H2O = L-methionine (S)-S-oxide + [thioredoxin]-dithiol. Functionally, has an important function as a repair enzyme for proteins that have been inactivated by oxidation. Catalyzes the reversible oxidation-reduction of methionine sulfoxide in proteins to methionine. The protein is Peptide methionine sulfoxide reductase MsrA of Campylobacter jejuni subsp. jejuni serotype O:6 (strain 81116 / NCTC 11828).